The primary structure comprises 1097 residues: Importin-5 (1097 aa).

Position 2 is an N-acetylalanine (A2). 24 HEAT repeats span residues 5 to 38, 43 to 77, 95 to 122, 130 to 157, 167 to 201, 210 to 246, 254 to 289, 298 to 350, 352 to 386, 390 to 430, 432 to 472, 475 to 523, 525 to 568, 570 to 615, 617 to 692, 695 to 737, 741 to 780, 787 to 853, 856 to 895, 903 to 935, 943 to 983, 990 to 1021, 1032 to 1067, and 1070 to 1093; these read AAEQ…NIPG, TFLL…FDEV, MIIQ…NLID, PEGL…IFWN, QHYL…AAFI, LFKH…IADT, HLEA…LSET, TNIV…ACGL, GKLV…SAIG, HQQM…ATDF, PGFQ…FTED, KSLL…ADTA, EKFV…GLAV, KEKF…CKIL, KEFQ…AKEL, GFVE…ARVR, YLTQ…IEVM, NEHF…FSSY, KVLP…IEHC, AEYF…MAQY, FCTE…MKFK, EEVL…DLIE, NTNL…VVRQ, and TSGG…IQEL. An Importin N-terminal domain is found at 28–99; it reads QAEETYENIP…KSELLMIIQM (72 aa). A ran-GTP binding region spans residues 325–375; sequence DELEDDDFDSNAVAGESALDRMACGLGGKLVLPMIKEHIMQMLQNPDWKYR. Phosphoserine is present on S827.

This sequence belongs to the importin beta family. Importin beta-3 subfamily. As to quaternary structure, interacts with RPS7 and RPL5. Interacts with RPL23A (via BIB domain). Interacts with H2A, H2B, H3 and H4 histones. Interacts with CPEB3; this mediates CPEB3 nuclear import following neuronal stimulation which enhances the interaction in a RAN-regulated manner. Interacts with AIFM2; this interaction likely mediates the translocation of AIFM2 into the nucleus upon oxidative stress. Interacts with STX3 (isoform 3). Interacts with SRP19. (Microbial infection) Interacts with HIV-1 Rev.

The protein localises to the cytoplasm. Its subcellular location is the nucleus. The protein resides in the nucleolus. Its function is as follows. Functions in nuclear protein import as nuclear transport receptor. Serves as receptor for nuclear localization signals (NLS) in cargo substrates. Is thought to mediate docking of the importin/substrate complex to the nuclear pore complex (NPC) through binding to nucleoporin and the complex is subsequently translocated through the pore by an energy requiring, Ran-dependent mechanism. At the nucleoplasmic side of the NPC, Ran binds to the importin, the importin/substrate complex dissociates and importin is re-exported from the nucleus to the cytoplasm where GTP hydrolysis releases Ran. The directionality of nuclear import is thought to be conferred by an asymmetric distribution of the GTP- and GDP-bound forms of Ran between the cytoplasm and nucleus. Mediates the nuclear import of ribosomal proteins RPL23A, RPS7 and RPL5. In vitro, mediates nuclear import of H2A, H2B, H3 and H4 histones. Binds to CPEB3 and mediates its nuclear import following neuronal stimulation. In case of HIV-1 infection, binds and mediates the nuclear import of HIV-1 Rev. This is Importin-5 (IPO5) from Homo sapiens (Human).